The sequence spans 526 residues: Biotin carboxylase 2, chloroplastic (526 aa).

A chloroplast-targeting transit peptide spans 1–71 (MEATLPVCKS…GVTCRAEKIL (71 aa)). ATP-binding positions include K181, 213–274 (ASEI…PRHI), K223, 229–230 (GG), 265–268 (EKYV), and H273. The 198-residue stretch at 185 to 382 (RETMKKANVP…LIEEQIRVAM (198 aa)) folds into the ATP-grasp domain. K302 is a hydrogencarbonate binding site. Positions 340 and 353 each coordinate ATP. Mg(2+) contacts are provided by E340, E353, and N355. Residues E340, E353, and N355 each contribute to the Mn(2+) site. Hydrogencarbonate contacts are provided by R357, V360, and R403. Residue R357 is part of the active site. Biotin is bound at residue R403.

In terms of assembly, acetyl-CoA carboxylase is a heterohexamer composed of biotin carboxyl carrier protein, biotin carboxylase and two subunits each of ACCase subunit alpha and ACCase plastid-coded subunit beta (accD). Requires Mg(2+) as cofactor. The cofactor is Mn(2+).

It localises to the plastid. It is found in the chloroplast. It catalyses the reaction N(6)-biotinyl-L-lysyl-[protein] + hydrogencarbonate + ATP = N(6)-carboxybiotinyl-L-lysyl-[protein] + ADP + phosphate + H(+). The protein operates within lipid metabolism; malonyl-CoA biosynthesis; malonyl-CoA from acetyl-CoA: step 1/1. In terms of biological role, this protein is a component of the acetyl coenzyme A carboxylase complex; first, biotin carboxylase catalyzes the carboxylation of the carrier protein and then the transcarboxylase transfers the carboxyl group to form malonyl-CoA. The polypeptide is Biotin carboxylase 2, chloroplastic (Populus trichocarpa (Western balsam poplar)).